A 400-amino-acid chain; its full sequence is WW domain-containing transcription regulator protein 1 (400 aa).

K46 participates in a covalent cross-link: Glycyl lysine isopeptide (Lys-Gly) (interchain with G-Cter in ubiquitin). Positions 52–117 (FFKEPDSGSH…QQHAHLRQQS (66 aa)) are disordered. Residues 61 to 70 (HSRQSSTDSS) show a composition bias toward polar residues. At S62 the chain carries Phosphoserine. S89 is modified (phosphoserine; by LATS2). A Phosphoserine modification is found at S105. The WW domain maps to 124–157 (LPLPPGWEMTFTATGQRYFLNHIEKITTWQDPRK). Residues 222-400 (PNALTTQQQQ…NKSEPFLTWL (179 aa)) form a required for interaction with PALS1 region. Positions 225-259 (LTTQQQQQQKLRLQRIQMERERIRMRQEELMRQEA) form a coiled coil. Residue S295 is modified to Phosphoserine. S311 bears the Phosphoserine; by LATS2 mark. Positions 394–400 (EPFLTWL) match the PDZ-binding motif.

As to quaternary structure, binds to SLC9A3R2 via the PDZ motif at the plasma membrane. Binds to YWHAZ in vivo and in vitro through the phosphoserine-binding motif RSHSSP. Interacts (via coiled-coil domain) with SMAD2 (via MH1 domain), SMAD3 and SMAD4. Interacts with MED15. Interacts with PAX8 and NKX2-1. Interacts with TEAD1, TEAD2, TEAD3 and TEAD4. Interacts (via WW domain) with PALS1. Interacts with LATS1. Interacts with YAP1 (when phosphorylated at 'Ser-127'). Interacts (via WW domain) with PRRG4 (via cytoplasmic domain). Interacts (via WW domain) with AMOTL2 (via PPXY motif); the interaction promotes WWTR1/TAZ localization to the cytoplasm and tight junctions, thereby inhibiting its transcriptional coactivator properties. Interacts (via WW domain) with AMOT isoform 1; the interaction facilitates translocation of WWTR1/TAZ to the cytoplasm. Phosphorylated by LATS2 and STK3/MST2. Phosphorylation by LATS2 results in creation of 14-3-3 binding sites, retention in the cytoplasm, and functional inactivation. Phosphorylation results in the inhibition of transcriptional coactivation through YWHAZ-mediated nuclear export. Phosphorylated in the nucleus by PRP4K; phosphorylation leads to nuclear exclusion. Post-translationally, ubiquitinated at Lys-46; leading to proteasomal degradation. Deubiquitinated and stabilized by UCHL1 at Lys-46; leading to inhibition of osteoclastogenesis. In terms of tissue distribution, highly expressed in kidney, heart, placenta and lung. Expressed in the thyroid tissue.

The protein resides in the nucleus. Its subcellular location is the cytoplasm. It localises to the cell membrane. The protein localises to the cell junction. It is found in the tight junction. Functionally, transcriptional coactivator which acts as a downstream regulatory target in the Hippo signaling pathway that plays a pivotal role in organ size control and tumor suppression by restricting proliferation and promoting apoptosis. The core of this pathway is composed of a kinase cascade wherein STK3/MST2 and STK4/MST1, in complex with its regulatory protein SAV1, phosphorylates and activates LATS1/2 in complex with its regulatory protein MOB1, which in turn phosphorylates and inactivates YAP1 oncoprotein and WWTR1/TAZ. WWTR1 enhances PAX8 and NKX2-1/TTF1-dependent gene activation. In conjunction with YAP1, involved in the regulation of TGFB1-dependent SMAD2 and SMAD3 nuclear accumulation. Plays a key role in coupling SMADs to the transcriptional machinery such as the mediator complex. Regulates embryonic stem-cell self-renewal, promotes cell proliferation and epithelial-mesenchymal transition. The chain is WW domain-containing transcription regulator protein 1 from Homo sapiens (Human).